The sequence spans 171 residues: Neudesin (171 aa).

Positions 1–30 are cleaved as a signal peptide; the sequence is MARPAPWWRLRLLAALVLALALVPVPSAWA. The Cytochrome b5 heme-binding domain occupies 43-128; the sequence is VRLFTEEELA…KELEALDDVF (86 aa). Lys-135 carries the post-translational modification N6-acetyllysine.

Belongs to the cytochrome b5 family. MAPR subfamily. Interacts with PINK1 and PARK7. In the embryo, expressed most abundantly in brain and spinal cord. Widely expressed in adult tissues including brain, heart, lung and kidney. In brain, expressed in neurons but not in glial cells. In the hypothalamus is expressed primarily in the paraventricular nucleus (PVN), with lower levels of expression in the arcuate nucleus (ARC).

Its subcellular location is the secreted. The protein resides in the extracellular space. It is found in the mitochondrion. It localises to the endoplasmic reticulum. Functionally, acts as a neurotrophic factor in postnatal mature neurons, enhancing neuronal survival. Promotes cell proliferation and neurogenesis in undifferentiated neural pro-genitor cells at the embryonic stage and inhibits differentiation of astrocytes. Its neurotrophic activity is exerted via MAPK1/ERK2, MAPK3/ERK1 and AKT1/AKT pathways. Neurotrophic activity is enhanced by binding to heme. Also acts as an anorexigenic neurotrophic factor that contributes to energy balance. In Mus musculus (Mouse), this protein is Neudesin.